A 362-amino-acid chain; its full sequence is MNRGVLESSPVQHLTAAGNPNWWNNVSRGLRPPTPLMSHEPPSTTAFIPSLLPNFFSSPTSSSSSSPSFPPPNSNPNFSSWLEMSDLPLDQPWSLSQLLLGGLMMGEEEKMEMMNHHHHQNQHQSYQAKRIQNWEEQVLRHQASMKQESSNNNSYGIMSSPNSPPNKSCATIINTNEDNNNNIHSGLNLSECNSSEMIGSSFANKKPKLQVPSSQSTLKVRKEKLGGRIASLHQLVSPFGKTDTASVLSEAIGYIRFLHSQIEALSLPYFGTPSRNNMMHQHAQRNMNGIFPEDPGQLVNEYCMKRGVSLSSTDNQKSNPNEEPMKDLRSRGLCLVPISCTLQVGSDNGADYWAPAFGTTLQ.

The bHLH domain maps to 209–258 (LQVPSSQSTLKVRKEKLGGRIASLHQLVSPFGKTDTASVLSEAIGYIRFL).

This sequence belongs to the bHLH protein family. Homodimer.

The protein resides in the nucleus. The sequence is that of Transcription factor bHLH133 (BHLH133) from Arabidopsis thaliana (Mouse-ear cress).